A 423-amino-acid chain; its full sequence is Serine--tRNA ligase (423 aa).

The disordered stretch occupies residues 107–130 (PHDSVPDGKSENDNREIRQWGAPP). A compositionally biased stretch (basic and acidic residues) spans 110-124 (SVPDGKSENDNREIR). 231–233 (TGE) contributes to the L-serine binding site. 262 to 264 (RSE) serves as a coordination point for ATP. Glutamate 285 is a binding site for L-serine. Residue 349–352 (EISS) coordinates ATP. Serine 385 contributes to the L-serine binding site.

It belongs to the class-II aminoacyl-tRNA synthetase family. Type-1 seryl-tRNA synthetase subfamily. As to quaternary structure, homodimer. The tRNA molecule binds across the dimer.

It localises to the cytoplasm. The catalysed reaction is tRNA(Ser) + L-serine + ATP = L-seryl-tRNA(Ser) + AMP + diphosphate + H(+). The enzyme catalyses tRNA(Sec) + L-serine + ATP = L-seryl-tRNA(Sec) + AMP + diphosphate + H(+). The protein operates within aminoacyl-tRNA biosynthesis; selenocysteinyl-tRNA(Sec) biosynthesis; L-seryl-tRNA(Sec) from L-serine and tRNA(Sec): step 1/1. In terms of biological role, catalyzes the attachment of serine to tRNA(Ser). Is also able to aminoacylate tRNA(Sec) with serine, to form the misacylated tRNA L-seryl-tRNA(Sec), which will be further converted into selenocysteinyl-tRNA(Sec). The protein is Serine--tRNA ligase of Coxiella burnetii (strain Dugway 5J108-111).